We begin with the raw amino-acid sequence, 146 residues long: Tyrosinase cofactor (146 aa).

A signal peptide (tat-type signal) is located at residues 1-30 (MPELTRRRALGAAAVVAAGVPLVALPAARA). Residues 65–85 (RTVTDGGGHHGGGHGGDGHGG) are disordered. The segment covering 69–85 (DGGGHHGGGHGGDGHGG) has biased composition (gly residues).

The protein belongs to the melC1 family. In terms of processing, predicted to be exported by the Tat system. The position of the signal peptide cleavage has not been experimentally proven.

In terms of biological role, this protein may function to deliver copper to tyrosinase. The sequence is that of Tyrosinase cofactor (melC1) from Streptomyces antibioticus.